A 1621-amino-acid chain; its full sequence is Lysophospholipase NTE1 (1621 aa).

The Cytoplasmic segment spans residues 1 to 12 (MSSIPTPPDANG). Residues 13 to 33 (NPLIALAVAVIYAILYVLQGV) traverse the membrane as a helical segment. Topologically, residues 34-59 (KYGVSLLTIGIPSCIVRMLQYSLTIS) are lumenal. A helical transmembrane segment spans residues 60–80 (LGFPHLLALFAGALLALFFLI). The Cytoplasmic segment spans residues 81–1621 (RYRYLTRYAQ…RGNRLRRMSI (1541 aa)). Disordered regions lie at residues 188–209 (PDASSQGTPTPSSDTNSPTRPS), 250–379 (EGEE…SVPR), 545–566 (QTATTTVKNEPLNGGSSPLDET), 648–667 (WNLNDSPHTDGQPVDPQRDD), 711–735 (VSALSTPNSPMFPPNAGTPLQGSTR), 772–791 (DDEASSISMSLHDSQGGASG), and 839–870 (FRSTSSNQENPNSTPGSKHRQSSFGSSNERPF). 2 stretches are compositionally biased toward low complexity: residues 195 to 209 (TPTPSSDTNSPTRPS) and 348 to 361 (RRSQSLRSSPRLNS). A nucleoside 3',5'-cyclic phosphate is bound by residues 788–907 (GASG…GYLS) and 951–1070 (RLLS…IAGR). Residues 839–867 (FRSTSSNQENPNSTPGSKHRQSSFGSSNE) are compositionally biased toward polar residues. The 165-residue stretch at 1316–1480 (LVLGGGGARG…MDNTPIQPLR (165 aa)) folds into the PNPLA domain. The short motif at 1320 to 1325 (GGGARG) is the GXGXXG element. Residues 1347–1351 (GCSIG) carry the GXSXG motif. The Nucleophile role is filled by Ser-1349. The active-site Proton acceptor is Asp-1467. The DGA/G signature appears at 1467–1469 (DGG).

This sequence belongs to the NTE family.

The protein resides in the endoplasmic reticulum membrane. The enzyme catalyses a 1-acyl-sn-glycero-3-phosphocholine + H2O = sn-glycerol 3-phosphocholine + a fatty acid + H(+). With respect to regulation, inhibited by organophosphorus esters. Functionally, intracellular phospholipase B that catalyzes the double deacylation of phosphatidylcholine (PC) to glycerophosphocholine (GroPCho). Plays an important role in membrane lipid homeostasis. Responsible for the rapid PC turnover in response to inositol, elevated temperatures, or when choline is present in the growth medium. This chain is Lysophospholipase NTE1 (NTE1), found in Cryptococcus neoformans var. neoformans serotype D (strain B-3501A) (Filobasidiella neoformans).